The chain runs to 924 residues: Isoleucine--tRNA ligase (924 aa).

Residues 57–67 carry the 'HIGH' region motif; the sequence is PYANGDIHMGH. Position 552 (Glu552) interacts with L-isoleucyl-5'-AMP. The short motif at 593-597 is the 'KMSKS' region element; the sequence is KMSKS. Lys596 contributes to the ATP binding site. Zn(2+) contacts are provided by Cys891, Cys894, Cys911, and Cys914.

Belongs to the class-I aminoacyl-tRNA synthetase family. IleS type 1 subfamily. Monomer. Zn(2+) serves as cofactor.

It is found in the cytoplasm. It carries out the reaction tRNA(Ile) + L-isoleucine + ATP = L-isoleucyl-tRNA(Ile) + AMP + diphosphate. Its function is as follows. Catalyzes the attachment of isoleucine to tRNA(Ile). As IleRS can inadvertently accommodate and process structurally similar amino acids such as valine, to avoid such errors it has two additional distinct tRNA(Ile)-dependent editing activities. One activity is designated as 'pretransfer' editing and involves the hydrolysis of activated Val-AMP. The other activity is designated 'posttransfer' editing and involves deacylation of mischarged Val-tRNA(Ile). The polypeptide is Isoleucine--tRNA ligase (Geobacillus kaustophilus (strain HTA426)).